Consider the following 258-residue polypeptide: Probable splicing factor, arginine/serine-rich 3 (258 aa).

One can recognise an RRM 1 domain in the interval 9 to 83 (QKVYVGNLPG…RRIRVEFTRG (75 aa)). Disordered regions lie at residues 81–120 (TRGV…PQRR) and 190–258 (AYIR…PSPQ). The span at 97-107 (GGDHRGGDFRG) shows a compositional bias: basic and acidic residues. The span at 108-117 (GRGGGRGGGP) shows a compositional bias: gly residues. Positions 123-197 (YRVIVEGLPP…ETAYIRVRED (75 aa)) constitute an RRM 2 domain. Positions 208-223 (GRDRSRSRSPRAERRA) are enriched in basic and acidic residues. Positions 228–246 (SPRRSRSRSRSRSRSRSRS) are enriched in basic residues. Positions 247 to 258 (ASRSPSRSPSPQ) are enriched in low complexity.

This sequence belongs to the splicing factor SR family. As to quaternary structure, interacts with spk-1. Directly phosphorylated by spk-1 in vitro on serine residues of the RS domain. Predominantly coexpressed with spk-1 in adult hermaphrodite germlines.

The protein localises to the nucleus. Plays an essential role in embryogenesis. This Caenorhabditis elegans protein is Probable splicing factor, arginine/serine-rich 3 (rsp-3).